Reading from the N-terminus, the 690-residue chain is Glycine--tRNA ligase 1, mitochondrial (690 aa).

The N-terminal 24 residues, 1–24, are a transit peptide targeting the mitochondrion; it reads MSFFNISRRFYSQIVKKSVKIKRM. N-acetylserine is present on S25. Residue S226 is modified to Phosphoserine. E251 is a binding site for glycine. Residues 283-285 and 294-295 each bind ATP; these read RNE and RV. Residue E302 coordinates glycine. Residue 410 to 411 participates in ATP binding; the sequence is EC. 2 positions are modified to phosphoserine: S476 and S528. 531–533 serves as a coordination point for glycine; the sequence is EPS. R538 lines the ATP pocket. Phosphothreonine is present on T689.

Belongs to the class-II aminoacyl-tRNA synthetase family. Homodimer.

The protein localises to the cytoplasm. It localises to the mitochondrion matrix. The enzyme catalyses tRNA(Gly) + glycine + ATP = glycyl-tRNA(Gly) + AMP + diphosphate. It carries out the reaction 2 ATP + H(+) = P(1),P(4)-bis(5'-adenosyl) tetraphosphate + diphosphate. In terms of biological role, catalyzes the ATP-dependent ligation of glycine to the 3'-end of its cognate tRNA, via the formation of an aminoacyl-adenylate intermediate (Gly-AMP). Also produces diadenosine tetraphosphate (Ap4A), a universal pleiotropic signaling molecule needed for cell regulation pathways, by direct condensation of 2 ATPs. Thereby, may play a special role in Ap4A homeostasis. The protein is Glycine--tRNA ligase 1, mitochondrial (GRS1) of Saccharomyces cerevisiae (strain ATCC 204508 / S288c) (Baker's yeast).